The chain runs to 179 residues: Protein GrpE (179 aa).

The disordered stretch occupies residues 1–20; the sequence is MSEETKEEIKNEKVDEEVTE.

It belongs to the GrpE family. Homodimer.

It localises to the cytoplasm. In terms of biological role, participates actively in the response to hyperosmotic and heat shock by preventing the aggregation of stress-denatured proteins, in association with DnaK and GrpE. It is the nucleotide exchange factor for DnaK and may function as a thermosensor. Unfolded proteins bind initially to DnaJ; upon interaction with the DnaJ-bound protein, DnaK hydrolyzes its bound ATP, resulting in the formation of a stable complex. GrpE releases ADP from DnaK; ATP binding to DnaK triggers the release of the substrate protein, thus completing the reaction cycle. Several rounds of ATP-dependent interactions between DnaJ, DnaK and GrpE are required for fully efficient folding. This Lactococcus lactis subsp. lactis (strain IL1403) (Streptococcus lactis) protein is Protein GrpE.